The following is a 509-amino-acid chain: Phosphoenolpyruvate carboxylase (509 aa).

The protein belongs to the PEPCase type 2 family. As to quaternary structure, homotetramer. The cofactor is Mg(2+).

The enzyme catalyses oxaloacetate + phosphate = phosphoenolpyruvate + hydrogencarbonate. Its function is as follows. Catalyzes the irreversible beta-carboxylation of phosphoenolpyruvate (PEP) to form oxaloacetate (OAA), a four-carbon dicarboxylic acid source for the tricarboxylic acid cycle. The sequence is that of Phosphoenolpyruvate carboxylase from Metallosphaera sedula (strain ATCC 51363 / DSM 5348 / JCM 9185 / NBRC 15509 / TH2).